Consider the following 112-residue polypeptide: Protein Churchill (112 aa).

Zn(2+) contacts are provided by C2, C5, C30, C33, H59, C61, C64, H66, H71, C88, and C91.

The protein belongs to the Churchill family.

Functionally, transcriptional activator that mediates FGF signaling during neural development. Plays a role in the regulation of cell movement. In terms of biological role, does not bind DNA by itself. This is Protein Churchill (CHURC1) from Homo sapiens (Human).